The primary structure comprises 130 residues: Small ribosomal subunit protein uS9 (130 aa).

It belongs to the universal ribosomal protein uS9 family.

The chain is Small ribosomal subunit protein uS9 from Anaeromyxobacter dehalogenans (strain 2CP-1 / ATCC BAA-258).